Consider the following 587-residue polypeptide: Aspartate--tRNA(Asp/Asn) ligase (587 aa).

E173 serves as a coordination point for L-aspartate. An aspartate region spans residues 197 to 200 (QLFK). R219 lines the L-aspartate pocket. ATP is bound by residues 219 to 221 (RDE) and Q228. H448 is an L-aspartate binding site. ATP is bound at residue E481. R488 contacts L-aspartate. 533 to 536 (GLDR) lines the ATP pocket.

This sequence belongs to the class-II aminoacyl-tRNA synthetase family. Type 1 subfamily. Homodimer.

It is found in the cytoplasm. The enzyme catalyses tRNA(Asx) + L-aspartate + ATP = L-aspartyl-tRNA(Asx) + AMP + diphosphate. In terms of biological role, aspartyl-tRNA synthetase with relaxed tRNA specificity since it is able to aspartylate not only its cognate tRNA(Asp) but also tRNA(Asn). Reaction proceeds in two steps: L-aspartate is first activated by ATP to form Asp-AMP and then transferred to the acceptor end of tRNA(Asp/Asn). The protein is Aspartate--tRNA(Asp/Asn) ligase of Alcanivorax borkumensis (strain ATCC 700651 / DSM 11573 / NCIMB 13689 / SK2).